We begin with the raw amino-acid sequence, 256 residues long: Venom allergen-1 (256 aa).

The N-terminal stretch at 1 to 21 (MAFNGIALLITATIFIGSCYA) is a signal peptide. The SCP domain occupies 65–211 (LNTHNKLRAE…MINYYLVCNY (147 aa)). N-linked (GlcNAc...) asparagine glycans are attached at residues Asn146 and Asn210.

It belongs to the CRISP family.

It is found in the secreted. In terms of biological role, activates autophagy in human monocytic cells, dendritic cells and macrophages. Functionally, (Microbial infection) Promotes Zika virus replication in human dendritic cells and macrophages. Facilitates Zika virus transmission from infected mosquitoes to the host in mouse model. The protein is Venom allergen-1 of Aedes albopictus (Asian tiger mosquito).